A 226-amino-acid polypeptide reads, in one-letter code: uncharacterized protein (226 aa).

An N-terminal signal peptide occupies residues 1–18; that stretch reads MRRIGLCISLLVTVLVMS.

This is an uncharacterized protein from Bacillus subtilis (strain 168).